We begin with the raw amino-acid sequence, 201 residues long: Adenylyl-sulfate kinase (201 aa).

35–42 (GLSGSGKS) serves as a coordination point for ATP. S109 acts as the Phosphoserine intermediate in catalysis.

Belongs to the APS kinase family.

The enzyme catalyses adenosine 5'-phosphosulfate + ATP = 3'-phosphoadenylyl sulfate + ADP + H(+). It functions in the pathway sulfur metabolism; hydrogen sulfide biosynthesis; sulfite from sulfate: step 2/3. Functionally, catalyzes the synthesis of activated sulfate. The chain is Adenylyl-sulfate kinase from Prochlorococcus marinus (strain SARG / CCMP1375 / SS120).